Here is a 275-residue protein sequence, read N- to C-terminus: Elongation factor Ts (275 aa).

Lys36 is covalently cross-linked (Isoglutamyl lysine isopeptide (Lys-Gln) (interchain with Q-Cter in protein Pup)). An involved in Mg(2+) ion dislocation from EF-Tu region spans residues 76-79 (TDFV).

It belongs to the EF-Ts family.

It is found in the cytoplasm. Associates with the EF-Tu.GDP complex and induces the exchange of GDP to GTP. It remains bound to the aminoacyl-tRNA.EF-Tu.GTP complex up to the GTP hydrolysis stage on the ribosome. This chain is Elongation factor Ts, found in Mycolicibacterium smegmatis (strain ATCC 700084 / mc(2)155) (Mycobacterium smegmatis).